The primary structure comprises 273 residues: Gamma-glutamyl cyclotransferase gliK (273 aa).

The chain crosses the membrane as a helical span at residues 227 to 243; the sequence is WLGWIILTLYGLMWSYH.

It belongs to the class-I pyridoxal-phosphate-dependent aminotransferase family.

Its subcellular location is the membrane. The catalysed reaction is an alpha-(gamma-L-glutamyl)-L-amino acid = 5-oxo-L-proline + an L-alpha-amino acid. It participates in mycotoxin biosynthesis. In terms of biological role, gamma-glutamyl cyclotransferase-like protein; part of the gene cluster that mediates the biosynthesis of gliotoxin, a member of the epipolythiodioxopiperazine (ETP) class of toxins characterized by a disulfide bridged cyclic dipeptide. The first step in gliotoxin biosynthesis is the condensation of serine and phenylalanine to form the cyclo-L-phenylalanyl-L-serine diketopiperazine (DKP) by the NRPS gliP. GliP is also able to produce the DKP cyclo-L-tryptophanyl-L-serine, suggesting that the substrate specificity of the first adenylation (A) domain in gliP is sufficiently relaxed to accommodate both L-Phe and L-Trp. The cytochrome P450 monooxygenase gliC has been shown to catalyze the subsequent hydroxylation of the alpha-carbon of L-Phe in cyclo-L-phenylalanyl-L-serine whereas the second cytochrome P450 enzyme, gliF, is presumably involved in the modification of the DKP side chain. The glutathione S-transferase (GST) gliG then forms a bis-glutathionylated biosynthetic intermediate which is responsible for the sulfurization of gliotoxin. This bis-glutathionylated intermediate is subsequently processed by the gamma-glutamyl cyclotransferase gliK to remove both gamma-glutamyl moieties. Subsequent processing via gliI yields a biosynthetic intermediate, which is N-methylated via the N-methyltransferase gliN, before the gliotoxin oxidoreductase gliT-mediated disulfide bridge closure. GliN-mediated amide methylation confers stability to ETP, damping the spontaneous formation of tri- and tetrasulfides. Intracellular dithiol gliotoxin oxidized by gliT is subsequently effluxed by gliA. Gliotoxin contributes to pathogenesis during invasive aspergillosis. In macrophages and neutrophils, gliotoxin showed inhibition of various different cell functions including cytokine production, antigen presentation, phagocytosis, and production of reactive oxygen species. The polypeptide is Gamma-glutamyl cyclotransferase gliK (Aspergillus fumigatus (strain ATCC MYA-4609 / CBS 101355 / FGSC A1100 / Af293) (Neosartorya fumigata)).